A 108-amino-acid chain; its full sequence is T-cell acute lymphocytic leukemia protein 2 homolog (108 aa).

A bHLH domain is found at 2-54 (TRKIFTNTRERWRQQSVNNAFAKLRKLIPTHPPDKKLSKNETLRLAMRYINFL). Residues 76–108 (GLFPPKTRLPDEDDRTLLNDYRVPSPGPSHGAP) form a disordered region.

The polypeptide is T-cell acute lymphocytic leukemia protein 2 homolog (Tal2) (Mus musculus (Mouse)).